Reading from the N-terminus, the 400-residue chain is Queuine tRNA-ribosyltransferase catalytic subunit (400 aa).

Aspartate 89 serves as the catalytic Proton acceptor. Residues 89-93, aspartate 143, glutamine 185, and glycine 212 contribute to the substrate site; that span reads DSGGF. The segment at 243 to 249 is RNA binding; sequence GVGFPVD. Aspartate 262 (nucleophile) is an active-site residue. The RNA binding; important for wobble base 34 recognition stretch occupies residues 267 to 271; sequence TRTAR. The Zn(2+) site is built by cysteine 301, cysteine 303, cysteine 306, and histidine 331.

The protein belongs to the queuine tRNA-ribosyltransferase family. Heterodimer of a catalytic subunit and an accessory subunit. Zn(2+) serves as cofactor.

Its subcellular location is the cytoplasm. The catalysed reaction is guanosine(34) in tRNA + queuine = queuosine(34) in tRNA + guanine. Functionally, catalytic subunit of the queuine tRNA-ribosyltransferase (TGT) that catalyzes the base-exchange of a guanine (G) residue with queuine (Q) at position 34 (anticodon wobble position) in tRNAs with GU(N) anticodons (tRNA-Asp, -Asn, -His and -Tyr), resulting in the hypermodified nucleoside queuosine (7-(((4,5-cis-dihydroxy-2-cyclopenten-1-yl)amino)methyl)-7-deazaguanosine). Catalysis occurs through a double-displacement mechanism. The nucleophile active site attacks the C1' of nucleotide 34 to detach the guanine base from the RNA, forming a covalent enzyme-RNA intermediate. The proton acceptor active site deprotonates the incoming queuine, allowing a nucleophilic attack on the C1' of the ribose to form the product. The protein is Queuine tRNA-ribosyltransferase catalytic subunit of Caenorhabditis briggsae.